Here is a 349-residue protein sequence, read N- to C-terminus: Ribosomal RNA large subunit methyltransferase Cfr (349 aa).

Glu-89 acts as the Proton acceptor in catalysis. The Radical SAM core domain occupies 96 to 331 (KAGWESFCIS…VTVRSQFGID (236 aa)). Residues Cys-103 and Cys-336 are joined by a disulfide bond. [4Fe-4S] cluster is bound by residues Cys-110, Cys-114, and Cys-117. Residues 156–157 (GE), Ser-187, 210–212 (SLH), and Asn-291 each bind S-adenosyl-L-methionine. Cys-336 functions as the S-methylcysteine intermediate in the catalytic mechanism.

This sequence belongs to the radical SAM superfamily. RlmN family. Cfr subfamily. Requires [4Fe-4S] cluster as cofactor.

Its subcellular location is the cytoplasm. The enzyme catalyses adenosine(2503) in 23S rRNA + 2 reduced [2Fe-2S]-[ferredoxin] + 2 S-adenosyl-L-methionine = 8-methyladenosine(2503) in 23S rRNA + 5'-deoxyadenosine + L-methionine + 2 oxidized [2Fe-2S]-[ferredoxin] + S-adenosyl-L-homocysteine. Its function is as follows. Specifically methylates position 8 of adenine 2503 in 23S rRNA. Confers resistance to some classes of antibiotics. This is Ribosomal RNA large subunit methyltransferase Cfr from Bacillus velezensis (strain DSM 23117 / BGSC 10A6 / LMG 26770 / FZB42) (Bacillus amyloliquefaciens subsp. plantarum).